The following is a 223-amino-acid chain: Golgi SNAP receptor complex member 1-1 (223 aa).

At 1 to 201 the chain is on the cytoplasmic side; that stretch reads MDVPSSWDAL…AAIKRKKSMD (201 aa). The stretch at 8 to 67 forms a coiled coil; it reads DALRKQARKIEAQLDEQMHSYRRLVSTKALSKSDGNESDLEAGIDLLLRQLQQVNAQMQA. Residues 202-222 form a helical; Anchor for type IV membrane protein membrane-spanning segment; that stretch reads TIILSLVAAVCTFLIFIYWIT. Position 223 (Lys223) is a topological domain, vesicular.

Belongs to the GOSR1 family. In terms of assembly, component of several multiprotein Golgi SNARE complexes.

It localises to the golgi apparatus membrane. Its function is as follows. Involved in transport from the ER to the Golgi apparatus as well as in intra-Golgi transport. It belongs to a super-family of proteins called t-SNAREs or soluble NSF (N-ethylmaleimide-sensitive factor) attachment protein receptor. This Arabidopsis thaliana (Mouse-ear cress) protein is Golgi SNAP receptor complex member 1-1 (GOS11).